The primary structure comprises 206 residues: Small ribosomal subunit protein uS4 (206 aa).

The S4 RNA-binding domain occupies 96–156 (SRLDNIVYRL…KKSKNQLRIK (61 aa)).

Belongs to the universal ribosomal protein uS4 family. Part of the 30S ribosomal subunit. Contacts protein S5. The interaction surface between S4 and S5 is involved in control of translational fidelity.

In terms of biological role, one of the primary rRNA binding proteins, it binds directly to 16S rRNA where it nucleates assembly of the body of the 30S subunit. Functionally, with S5 and S12 plays an important role in translational accuracy. The protein is Small ribosomal subunit protein uS4 of Buchnera aphidicola subsp. Cinara cedri (strain Cc).